We begin with the raw amino-acid sequence, 457 residues long: uncharacterized protein (457 aa).

A TRAM domain is found at Pro5–Lys63. Residues Cys76, Cys82, Cys85, and Cys166 each coordinate [4Fe-4S] cluster. The S-adenosyl-L-methionine site is built by Gln290, Tyr319, Asp340, and Asp388. Cys415 serves as the catalytic Nucleophile.

This sequence belongs to the class I-like SAM-binding methyltransferase superfamily. RNA M5U methyltransferase family.

This is an uncharacterized protein from Listeria innocua serovar 6a (strain ATCC BAA-680 / CLIP 11262).